Consider the following 430-residue polypeptide: Aspartate aminotransferase, mitochondrial (430 aa).

The N-terminal 29 residues, 1-29, are a transit peptide targeting the mitochondrion; that stretch reads MALLHSGRVLSGVASAFHPGLAAAASARA. T48 carries the post-translational modification Phosphothreonine. K59 is subject to N6-acetyllysine. Substrate is bound at residue G65. K73 carries the N6-acetyllysine; alternate modification. N6-succinyllysine; alternate is present on K73. K82 is subject to N6-acetyllysine. Residue K90 is modified to N6-acetyllysine; alternate. The residue at position 90 (K90) is an N6-succinyllysine; alternate. Y96 bears the 3'-nitrotyrosine; alternate mark. The residue at position 96 (Y96) is a Phosphotyrosine; alternate. Residues K107, K122, and K159 each carry the N6-acetyllysine; alternate modification. An N6-succinyllysine; alternate mark is found at K107, K122, and K159. Residue W162 coordinates substrate. Residue K185 is modified to N6-acetyllysine; alternate. K185 is modified (N6-succinyllysine; alternate). N215 contacts substrate. K227 carries the post-translational modification N6-succinyllysine. The residue at position 234 (K234) is an N6-acetyllysine. Residues K279 and K296 each carry the N6-acetyllysine; alternate modification. K279 carries the N6-(pyridoxal phosphate)lysine; alternate modification. K296 is subject to N6-succinyllysine; alternate. At K302 the chain carries N6-acetyllysine. K309 bears the N6-acetyllysine; alternate mark. Residue K309 is modified to N6-succinyllysine; alternate. The residue at position 313 (R313) is an Asymmetric dimethylarginine. K345 carries the post-translational modification N6-acetyllysine. At K363 the chain carries N6-acetyllysine; alternate. K363 bears the N6-succinyllysine; alternate mark. K364 and K387 each carry N6-acetyllysine. Residues K396 and K404 each carry the N6-acetyllysine; alternate modification. N6-succinyllysine; alternate occurs at positions 396 and 404. R407 serves as a coordination point for substrate.

Belongs to the class-I pyridoxal-phosphate-dependent aminotransferase family. Homodimer. Requires pyridoxal 5'-phosphate as cofactor.

The protein resides in the mitochondrion matrix. It is found in the cell membrane. The enzyme catalyses L-aspartate + 2-oxoglutarate = oxaloacetate + L-glutamate. The catalysed reaction is L-kynurenine + 2-oxoglutarate = kynurenate + L-glutamate + H2O. Catalyzes the irreversible transamination of the L-tryptophan metabolite L-kynurenine to form kynurenic acid (KA). As a member of the malate-aspartate shuttle, it has a key role in the intracellular NAD(H) redox balance. Is important for metabolite exchange between mitochondria and cytosol, and for amino acid metabolism. Facilitates cellular uptake of long-chain free fatty acids. The chain is Aspartate aminotransferase, mitochondrial (GOT2) from Sus scrofa (Pig).